The chain runs to 250 residues: Aquaporin SIP2-1 (250 aa).

Transmembrane regions (helical) follow at residues 14 to 34 (PWLV…GALV) and 55 to 75 (VALS…TGGA). The short motif at 78–80 (NPL) is the NPA 1 element. Helical transmembrane passes span 95–115 (LYLF…ILGV), 132–152 (SVGV…VVIV), 178–200 (FHLL…AWAY), and 211–231 (LLVY…VVTL). The NPA 2 signature appears at 191–193 (NPA).

The protein belongs to the MIP/aquaporin (TC 1.A.8) family. SIP (TC 1.A.8.10) subfamily. Expressed in leaves and anthers, and at lower levels in roots.

Its subcellular location is the membrane. Aquaporins facilitate the transport of water and small neutral solutes across cell membranes. The protein is Aquaporin SIP2-1 (SIP2-1) of Oryza sativa subsp. japonica (Rice).